A 227-amino-acid polypeptide reads, in one-letter code: Cytochrome c oxidase subunit 2 (227 aa).

Residues Met1–Ser14 lie on the Mitochondrial intermembrane side of the membrane. A helical transmembrane segment spans residues Pro15–Thr45. The Mitochondrial matrix portion of the chain corresponds to Leu46–Gln59. The chain crosses the membrane as a helical span at residues Glu60–Thr87. At Asp88–Leu227 the chain is on the mitochondrial intermembrane side. Cu cation-binding residues include His161, Cys196, Glu198, Cys200, His204, and Met207. Residue Glu198 coordinates Mg(2+).

This sequence belongs to the cytochrome c oxidase subunit 2 family. As to quaternary structure, component of the cytochrome c oxidase (complex IV, CIV), a multisubunit enzyme composed of 14 subunits. The complex is composed of a catalytic core of 3 subunits MT-CO1, MT-CO2 and MT-CO3, encoded in the mitochondrial DNA, and 11 supernumerary subunits COX4I, COX5A, COX5B, COX6A, COX6B, COX6C, COX7A, COX7B, COX7C, COX8 and NDUFA4, which are encoded in the nuclear genome. The complex exists as a monomer or a dimer and forms supercomplexes (SCs) in the inner mitochondrial membrane with NADH-ubiquinone oxidoreductase (complex I, CI) and ubiquinol-cytochrome c oxidoreductase (cytochrome b-c1 complex, complex III, CIII), resulting in different assemblies (supercomplex SCI(1)III(2)IV(1) and megacomplex MCI(2)III(2)IV(2)). Found in a complex with TMEM177, COA6, COX18, COX20, SCO1 and SCO2. Interacts with TMEM177 in a COX20-dependent manner. Interacts with COX20. Interacts with COX16. Requires Cu cation as cofactor.

It localises to the mitochondrion inner membrane. It catalyses the reaction 4 Fe(II)-[cytochrome c] + O2 + 8 H(+)(in) = 4 Fe(III)-[cytochrome c] + 2 H2O + 4 H(+)(out). Functionally, component of the cytochrome c oxidase, the last enzyme in the mitochondrial electron transport chain which drives oxidative phosphorylation. The respiratory chain contains 3 multisubunit complexes succinate dehydrogenase (complex II, CII), ubiquinol-cytochrome c oxidoreductase (cytochrome b-c1 complex, complex III, CIII) and cytochrome c oxidase (complex IV, CIV), that cooperate to transfer electrons derived from NADH and succinate to molecular oxygen, creating an electrochemical gradient over the inner membrane that drives transmembrane transport and the ATP synthase. Cytochrome c oxidase is the component of the respiratory chain that catalyzes the reduction of oxygen to water. Electrons originating from reduced cytochrome c in the intermembrane space (IMS) are transferred via the dinuclear copper A center (CU(A)) of subunit 2 and heme A of subunit 1 to the active site in subunit 1, a binuclear center (BNC) formed by heme A3 and copper B (CU(B)). The BNC reduces molecular oxygen to 2 water molecules using 4 electrons from cytochrome c in the IMS and 4 protons from the mitochondrial matrix. The protein is Cytochrome c oxidase subunit 2 (MT-CO2) of Symphalangus syndactylus (Siamang).